The chain runs to 37 residues: Mu-agatoxin-Aa1d (37 aa).

4 disulfides stabilise this stretch: cysteine 2-cysteine 18, cysteine 9-cysteine 23, cysteine 17-cysteine 33, and cysteine 25-cysteine 31. Asparagine 37 is modified (asparagine amide).

This sequence belongs to the neurotoxin 07 (Beta/delta-agtx) family. 03 (aga-4) subfamily. Aga sub-subfamily. Expressed by the venom gland.

Its subcellular location is the secreted. Insecticidal neurotoxin that induces an irreversible spastic paralysis when injected into insects. Modifies presynaptic voltage-gated sodium channels (Nav), causing them to open at the normal resting potential of the nerve. This leads to spontaneous release of neurotransmitter and repetitive action potentials in motor neurons. This chain is Mu-agatoxin-Aa1d, found in Agelenopsis aperta (North American funnel-web spider).